The chain runs to 544 residues: Matrilin-1 (544 aa).

Residues Met1–Gly26 form the signal peptide. The VWFA 1 domain occupies Asp42 to Phe217. Residue Asn77 is glycosylated (N-linked (GlcNAc...) asparagine). Positions Val224–Asn264 constitute an EGF-like domain. 3 cysteine pairs are disulfide-bonded: Cys228–Cys239, Cys235–Cys248, and Cys250–Cys263. The VWFA 2 domain maps to Asp276–Leu448. N-linked (GlcNAc...) asparagine glycosylation is present at Asn345.

In terms of assembly, homotrimer. Part of a complex composed of MATN1 (via VWFA1 domain), type 2 collagens and type 6 collagens. Forms a complex (via covalent bonds) with ACAN; the interaction increases in abundance with increasing age of the organism via an increase in occupancy of MATN1 binding sites. Interacts with COMP. Post-translationally, N-glycosylated; reduces binding affinity for type 2 collagens. As to expression, expressed in trachea from fetus into adulthood (at protein level).

Its subcellular location is the secreted. It is found in the extracellular space. It localises to the extracellular matrix. Functionally, a major component of the extracellular matrix of non-articular cartilage. Binds to type 2 collagens and forms long concatenated protein networks as part of the extracellular matrix. Required for the network-like organization and bundling of collagen fibrils surrounding chondrocytes in the zones of maturation and hypertrophy. Required for mechanotransduction and adaption to mechanical loading in cartilage chondrocytes, resulting in an increase in expression of the extracellular matrix components ACAN and COL2A1. Acts as a moderator of angiogenesis in response to injury. The polypeptide is Matrilin-1 (Bos taurus (Bovine)).